The chain runs to 342 residues: Biotin synthase (342 aa).

Residues 63–288 (PEVEVEGIIS…RTMLRFAGGR (226 aa)) enclose the Radical SAM core domain. The [4Fe-4S] cluster site is built by Cys-78, Cys-82, and Cys-85. Positions 121, 154, 213, and 283 each coordinate [2Fe-2S] cluster.

This sequence belongs to the radical SAM superfamily. Biotin synthase family. As to quaternary structure, homodimer. [4Fe-4S] cluster is required as a cofactor. [2Fe-2S] cluster serves as cofactor.

It catalyses the reaction (4R,5S)-dethiobiotin + (sulfur carrier)-SH + 2 reduced [2Fe-2S]-[ferredoxin] + 2 S-adenosyl-L-methionine = (sulfur carrier)-H + biotin + 2 5'-deoxyadenosine + 2 L-methionine + 2 oxidized [2Fe-2S]-[ferredoxin]. It participates in cofactor biosynthesis; biotin biosynthesis; biotin from 7,8-diaminononanoate: step 2/2. Its function is as follows. Catalyzes the conversion of dethiobiotin (DTB) to biotin by the insertion of a sulfur atom into dethiobiotin via a radical-based mechanism. In Mycobacteroides abscessus (strain ATCC 19977 / DSM 44196 / CCUG 20993 / CIP 104536 / JCM 13569 / NCTC 13031 / TMC 1543 / L948) (Mycobacterium abscessus), this protein is Biotin synthase.